The primary structure comprises 524 residues: Cytochrome P450 52A6 (524 aa).

The chain crosses the membrane as a helical span at residues 17–34 (WYTVITLAALVFLISSNI). Cysteine 472 contacts heme.

Belongs to the cytochrome P450 family. Requires heme as cofactor.

Its subcellular location is the membrane. Together with an NADPH cytochrome P450 the enzyme system catalyzes the terminal hydroxylation as the first step in the assimilation of alkanes and fatty acids. Preferentially hydroxylates hexadecane. This chain is Cytochrome P450 52A6 (CYP52A6), found in Candida tropicalis (Yeast).